A 202-amino-acid polypeptide reads, in one-letter code: Large ribosomal subunit protein bL9 (202 aa).

Positions 176–202 (AAGEFFDPDAQHDDEPAAEDDQNAEEK) are disordered. Residues 191 to 202 (PAAEDDQNAEEK) show a composition bias toward acidic residues.

The protein belongs to the bacterial ribosomal protein bL9 family.

Its function is as follows. Binds to the 23S rRNA. The protein is Large ribosomal subunit protein bL9 of Nitrobacter winogradskyi (strain ATCC 25391 / DSM 10237 / CIP 104748 / NCIMB 11846 / Nb-255).